The primary structure comprises 175 residues: Large ribosomal subunit protein uL15 (175 aa).

2 disordered regions span residues Met-1–Phe-65 and Pro-155–Ala-175. Over residues Arg-12–Gly-21 the composition is skewed to basic residues. Residues Arg-22 to Gly-38 show a composition bias toward gly residues. The segment covering Lys-160 to Ala-169 has biased composition (low complexity).

This sequence belongs to the universal ribosomal protein uL15 family. Part of the 50S ribosomal subunit.

Its function is as follows. Binds to the 23S rRNA. In Myxococcus xanthus (strain DK1622), this protein is Large ribosomal subunit protein uL15.